The chain runs to 412 residues: MDDERFQQAEMNIGMVGHVDHGKTTLTKALSGVWTDTHSEETRRGISIRLGYADTVLTRCPECDTYSVEEKCPECGAETEWLRRVSFVDSPGHETLMATMLSGAAIMDAAILVIAANEPCPQPQTREHLMALEIIGTEDVIVVQNKIDLVTPEEAREHYEQIVQFLEEETHLDPDKTPIIPVSAQHKANLDVLVEAMYEHFEPPEYDLDAPFRMYIARSFDVNKPGTRPSDLKGGVIGGAIVQGEVEIGDEIEIRPGIRVERYGRTEWEPVYTEVVSLHANVTPVERARPGGLVGIGTKLDPTMTKADRLSGQVAGEPDTLPPVRHELLLEVELLERVVGTEEERKVEPIRTNEVLMLTVGTATTVGVVTSARDDEIEIKLKQPVCAEEGDRVAISRRIQRWRLIGHGVIKG.

One can recognise a tr-type G domain in the interval 8 to 205 (QAEMNIGMVG…AMYEHFEPPE (198 aa)). The interval 17–24 (GHVDHGKT) is G1. Residues aspartate 20, threonine 24, glycine 45, and serine 47 each contribute to the Mg(2+) site. A GTP-binding site is contributed by 20–25 (DHGKTT). Residues 45-49 (GISIR) are G2. Zn(2+) is bound by residues cysteine 60, cysteine 63, cysteine 72, and cysteine 75. Positions 89–92 (DSPG) are G3. Residues 145-148 (NKID) and 183-185 (SAQ) each bind GTP. The interval 145–148 (NKID) is G4. The tract at residues 183-185 (SAQ) is G5.

The protein belongs to the TRAFAC class translation factor GTPase superfamily. Classic translation factor GTPase family. EIF2G subfamily. Heterotrimer composed of an alpha, a beta and a gamma chain. Mg(2+) is required as a cofactor.

The enzyme catalyses GTP + H2O = GDP + phosphate + H(+). Functionally, eIF-2 functions in the early steps of protein synthesis by forming a ternary complex with GTP and initiator tRNA. In Methanopyrus kandleri (strain AV19 / DSM 6324 / JCM 9639 / NBRC 100938), this protein is Translation initiation factor 2 subunit gamma.